The following is a 104-amino-acid chain: Large ribosomal subunit protein bL21 (104 aa).

Belongs to the bacterial ribosomal protein bL21 family. As to quaternary structure, part of the 50S ribosomal subunit. Contacts protein L20.

In terms of biological role, this protein binds to 23S rRNA in the presence of protein L20. This is Large ribosomal subunit protein bL21 from Clostridium tetani (strain Massachusetts / E88).